A 94-amino-acid chain; its full sequence is Aspartyl/glutamyl-tRNA(Asn/Gln) amidotransferase subunit C (94 aa).

The protein belongs to the GatC family. As to quaternary structure, heterotrimer of A, B and C subunits.

The catalysed reaction is L-glutamyl-tRNA(Gln) + L-glutamine + ATP + H2O = L-glutaminyl-tRNA(Gln) + L-glutamate + ADP + phosphate + H(+). It catalyses the reaction L-aspartyl-tRNA(Asn) + L-glutamine + ATP + H2O = L-asparaginyl-tRNA(Asn) + L-glutamate + ADP + phosphate + 2 H(+). Allows the formation of correctly charged Asn-tRNA(Asn) or Gln-tRNA(Gln) through the transamidation of misacylated Asp-tRNA(Asn) or Glu-tRNA(Gln) in organisms which lack either or both of asparaginyl-tRNA or glutaminyl-tRNA synthetases. The reaction takes place in the presence of glutamine and ATP through an activated phospho-Asp-tRNA(Asn) or phospho-Glu-tRNA(Gln). The sequence is that of Aspartyl/glutamyl-tRNA(Asn/Gln) amidotransferase subunit C from Hydrogenobaculum sp. (strain Y04AAS1).